The chain runs to 92 residues: Co-chaperonin GroES (92 aa).

Belongs to the GroES chaperonin family. In terms of assembly, heptamer of 7 subunits arranged in a ring. Interacts with the chaperonin GroEL.

Its subcellular location is the cytoplasm. In terms of biological role, together with the chaperonin GroEL, plays an essential role in assisting protein folding. The GroEL-GroES system forms a nano-cage that allows encapsulation of the non-native substrate proteins and provides a physical environment optimized to promote and accelerate protein folding. GroES binds to the apical surface of the GroEL ring, thereby capping the opening of the GroEL channel. This Methanosarcina mazei (strain ATCC BAA-159 / DSM 3647 / Goe1 / Go1 / JCM 11833 / OCM 88) (Methanosarcina frisia) protein is Co-chaperonin GroES.